A 141-amino-acid polypeptide reads, in one-letter code: Nucleoside diphosphate kinase (141 aa).

ATP is bound by residues lysine 11, phenylalanine 59, arginine 87, threonine 93, arginine 104, and asparagine 114. Histidine 117 serves as the catalytic Pros-phosphohistidine intermediate.

Belongs to the NDK family. Homotetramer. Mg(2+) is required as a cofactor.

It localises to the cytoplasm. It carries out the reaction a 2'-deoxyribonucleoside 5'-diphosphate + ATP = a 2'-deoxyribonucleoside 5'-triphosphate + ADP. The enzyme catalyses a ribonucleoside 5'-diphosphate + ATP = a ribonucleoside 5'-triphosphate + ADP. Major role in the synthesis of nucleoside triphosphates other than ATP. The ATP gamma phosphate is transferred to the NDP beta phosphate via a ping-pong mechanism, using a phosphorylated active-site intermediate. In Bdellovibrio bacteriovorus (strain ATCC 15356 / DSM 50701 / NCIMB 9529 / HD100), this protein is Nucleoside diphosphate kinase.